A 547-amino-acid chain; its full sequence is Chaperonin GroEL (547 aa).

ATP-binding positions include 30-33 (TLGP), Lys51, 87-91 (DGTTT), Gly415, and Asp496. Residues 528–547 (KEGAGAGGGMPDMGGMGGMM) form a disordered region. A compositionally biased stretch (gly residues) spans 531–547 (AGAGGGMPDMGGMGGMM).

This sequence belongs to the chaperonin (HSP60) family. As to quaternary structure, forms a cylinder of 14 subunits composed of two heptameric rings stacked back-to-back. Interacts with the co-chaperonin GroES.

Its subcellular location is the cytoplasm. The enzyme catalyses ATP + H2O + a folded polypeptide = ADP + phosphate + an unfolded polypeptide.. Together with its co-chaperonin GroES, plays an essential role in assisting protein folding. The GroEL-GroES system forms a nano-cage that allows encapsulation of the non-native substrate proteins and provides a physical environment optimized to promote and accelerate protein folding. The sequence is that of Chaperonin GroEL from Dinoroseobacter shibae (strain DSM 16493 / NCIMB 14021 / DFL 12).